Reading from the N-terminus, the 286-residue chain is Protease HtpX homolog (286 aa).

2 helical membrane passes run Thr-7 to Gly-27 and Ser-29 to Ser-49. His-131 is a Zn(2+) binding site. Glu-132 is a catalytic residue. A Zn(2+)-binding site is contributed by His-135. A run of 2 helical transmembrane segments spans residues Leu-146–Gly-166 and Ile-177–Ile-197. Glu-202 is a Zn(2+) binding site.

This sequence belongs to the peptidase M48B family. Requires Zn(2+) as cofactor.

The protein resides in the cell inner membrane. The sequence is that of Protease HtpX homolog from Ralstonia nicotianae (strain ATCC BAA-1114 / GMI1000) (Ralstonia solanacearum).